A 244-amino-acid polypeptide reads, in one-letter code: 2,5-diamino-6-ribosylamino-4(3H)-pyrimidinone 5'-phosphate reductase (244 aa).

Residues Thr74, Asp78, Ile160, and 183-187 each bind NADP(+); that span reads GSHVI.

It belongs to the HTP reductase family. In terms of assembly, homodimer.

The enzyme catalyses 2,5-diamino-6-(1-D-ribitylamino)pyrimidin-4(3H)-one 5'-phosphate + NADP(+) = 2,5-diamino-6-(1-D-ribosylamino)pyrimidin-4(3H)-one 5'-phosphate + NADPH + H(+). It carries out the reaction 2,5-diamino-6-(1-D-ribitylamino)pyrimidin-4(3H)-one 5'-phosphate + NAD(+) = 2,5-diamino-6-(1-D-ribosylamino)pyrimidin-4(3H)-one 5'-phosphate + NADH + H(+). It participates in cofactor biosynthesis; riboflavin biosynthesis. Its function is as follows. Catalyzes an early step in riboflavin biosynthesis, the NADPH-dependent reduction of the ribose side chain of 2,5-diamino-6-ribosylamino-4(3H)-pyrimidinone 5'-phosphate, yielding 2,5-diamino-6-ribitylamino-4(3H)-pyrimidinone 5'-phosphate. The chain is 2,5-diamino-6-ribosylamino-4(3H)-pyrimidinone 5'-phosphate reductase (RIB7) from Candida glabrata (strain ATCC 2001 / BCRC 20586 / JCM 3761 / NBRC 0622 / NRRL Y-65 / CBS 138) (Yeast).